The chain runs to 340 residues: Uroporphyrinogen decarboxylase (340 aa).

Substrate contacts are provided by residues 23 to 27, D72, Y147, T202, and H316; that span reads RQAGR.

Belongs to the uroporphyrinogen decarboxylase family. In terms of assembly, homodimer.

It is found in the cytoplasm. The catalysed reaction is uroporphyrinogen III + 4 H(+) = coproporphyrinogen III + 4 CO2. Its pathway is porphyrin-containing compound metabolism; protoporphyrin-IX biosynthesis; coproporphyrinogen-III from 5-aminolevulinate: step 4/4. Catalyzes the decarboxylation of four acetate groups of uroporphyrinogen-III to yield coproporphyrinogen-III. This is Uroporphyrinogen decarboxylase from Pelobacter propionicus (strain DSM 2379 / NBRC 103807 / OttBd1).